The following is a 326-amino-acid chain: Target of rapamycin complex subunit lst8 (326 aa).

7 WD repeats span residues 1–37, 40–80, 83–122, 126–165, 168–207, 218–257, and 268–309; these read MNSN…CTRT, HQDS…PVIN, GVSK…LQCQ, QVNA…NEQL, ETDV…GEDL, AHKR…LMTE, and TSRG…REYS.

Belongs to the WD repeat LST8 family. Part of the mechanistic target of rapamycin complex 1 (mTORC1) which contains MTOR, MLST8 and RPTOR. Component of the mechanistic target of rapamycin complex 2 (mTORC2), consisting in two heterotretramers composed of MTOR, MLST8, RICTOR and MAPKAP1/SIN1.

The protein localises to the lysosome membrane. It localises to the cytoplasm. Its function is as follows. Subunit of both mTORC1 and mTORC2, which regulates cell growth and survival in response to nutrient and hormonal signals. mTORC1 is activated in response to growth factors or amino acids. In response to nutrients, mTORC1 is recruited to the lysosome membrane and promotes protein, lipid and nucleotide synthesis by phosphorylating several substrates, such as ribosomal protein S6 kinase (RPS6KB1 and RPS6KB2) and EIF4EBP1 (4E-BP1). In the same time, it inhibits catabolic pathways by phosphorylating the autophagy initiation components ULK1 and ATG13, as well as transcription factor TFEB, a master regulators of lysosomal biogenesis and autophagy. The mTORC1 complex is inhibited in response to starvation and amino acid depletion. Within mTORC1, MLST8 interacts directly with MTOR and enhances its kinase activity. In nutrient-poor conditions, stabilizes the MTOR-RPTOR interaction and favors RPTOR-mediated inhibition of MTOR activity. As part of the mTORC2 complex, transduces signals from growth factors to pathways involved in proliferation, cytoskeletal organization, lipogenesis and anabolic output. mTORC2 is also activated by growth factors, but seems to be nutrient-insensitive. In response to growth factors, mTORC2 phosphorylates and activates AGC protein kinase family members, including AKT (AKT1, AKT2 and AKT3), PKC (PRKCA, PRKCB and PRKCE) and SGK1. mTORC2 functions upstream of Rho GTPases to regulate the actin cytoskeleton, probably by activating one or more Rho-type guanine nucleotide exchange factors. mTORC2 promotes the serum-induced formation of stress-fibers or F-actin. Within mTORC2, MLST8 acts as a bridge between MAPKAP1/SIN1 and MTOR. This is Target of rapamycin complex subunit lst8 (mlst8) from Xenopus tropicalis (Western clawed frog).